The chain runs to 144 residues: Large ribosomal subunit protein uL11 (144 aa).

Belongs to the universal ribosomal protein uL11 family. Part of the ribosomal stalk of the 50S ribosomal subunit. Interacts with L10 and the large rRNA to form the base of the stalk. L10 forms an elongated spine to which L12 dimers bind in a sequential fashion forming a multimeric L10(L12)X complex. In terms of processing, one or more lysine residues are methylated.

Its function is as follows. Forms part of the ribosomal stalk which helps the ribosome interact with GTP-bound translation factors. The protein is Large ribosomal subunit protein uL11 of Francisella tularensis subsp. mediasiatica (strain FSC147).